A 354-amino-acid polypeptide reads, in one-letter code: Probable L-ascorbate-6-phosphate lactonase UlaG (354 aa).

The protein belongs to the UlaG family. The cofactor is a divalent metal cation.

Its subcellular location is the cytoplasm. The enzyme catalyses L-ascorbate 6-phosphate + H2O = 3-dehydro-L-gulonate 6-phosphate. It participates in cofactor degradation; L-ascorbate degradation; D-xylulose 5-phosphate from L-ascorbate: step 1/4. Probably catalyzes the hydrolysis of L-ascorbate-6-P into 3-keto-L-gulonate-6-P. Is essential for L-ascorbate utilization under anaerobic conditions. This is Probable L-ascorbate-6-phosphate lactonase UlaG from Salmonella gallinarum (strain 287/91 / NCTC 13346).